The sequence spans 370 residues: UDP-N-acetylglucosamine--N-acetylmuramyl-(pentapeptide) pyrophosphoryl-undecaprenol N-acetylglucosamine transferase (370 aa).

Residues 15 to 17, N126, R169, S197, and Q299 each bind UDP-N-acetyl-alpha-D-glucosamine; that span reads TGG.

The protein belongs to the glycosyltransferase 28 family. MurG subfamily.

It localises to the cell inner membrane. The enzyme catalyses di-trans,octa-cis-undecaprenyl diphospho-N-acetyl-alpha-D-muramoyl-L-alanyl-D-glutamyl-meso-2,6-diaminopimeloyl-D-alanyl-D-alanine + UDP-N-acetyl-alpha-D-glucosamine = di-trans,octa-cis-undecaprenyl diphospho-[N-acetyl-alpha-D-glucosaminyl-(1-&gt;4)]-N-acetyl-alpha-D-muramoyl-L-alanyl-D-glutamyl-meso-2,6-diaminopimeloyl-D-alanyl-D-alanine + UDP + H(+). The protein operates within cell wall biogenesis; peptidoglycan biosynthesis. Its function is as follows. Cell wall formation. Catalyzes the transfer of a GlcNAc subunit on undecaprenyl-pyrophosphoryl-MurNAc-pentapeptide (lipid intermediate I) to form undecaprenyl-pyrophosphoryl-MurNAc-(pentapeptide)GlcNAc (lipid intermediate II). This chain is UDP-N-acetylglucosamine--N-acetylmuramyl-(pentapeptide) pyrophosphoryl-undecaprenol N-acetylglucosamine transferase, found in Methylorubrum populi (strain ATCC BAA-705 / NCIMB 13946 / BJ001) (Methylobacterium populi).